Reading from the N-terminus, the 88-residue chain is Sec-independent protein translocase protein TatA (88 aa).

Residues 1 to 21 (MGGASIWHWIVVGVIVMLLFG) form a helical membrane-spanning segment. Residues 62 to 88 (TEPVRTLPPHPTEPAPATHATVDRKVV) form a disordered region.

The protein belongs to the TatA/E family. In terms of assembly, the Tat system comprises two distinct complexes: a TatABC complex, containing multiple copies of TatA, TatB and TatC subunits, and a separate TatA complex, containing only TatA subunits. Substrates initially bind to the TatABC complex, which probably triggers association of the separate TatA complex to form the active translocon.

The protein localises to the cell inner membrane. Functionally, part of the twin-arginine translocation (Tat) system that transports large folded proteins containing a characteristic twin-arginine motif in their signal peptide across membranes. TatA could form the protein-conducting channel of the Tat system. The polypeptide is Sec-independent protein translocase protein TatA (Methylobacterium sp. (strain 4-46)).